The following is a 319-amino-acid chain: D-alanine--D-alanine ligase (319 aa).

The segment at 1-23 (MTGPEWAHTRGTKVGQSSRTPPK) is disordered. The ATP-grasp domain maps to 120 to 313 (KDAFVAAGLP…FGKLCAWMVE (194 aa)). 147–197 (MQPPYVVKPNNEGSSVGVYLVHEAANGPPQLSEDMPQEVMVEAFAPGRELT) is a binding site for ATP. Mg(2+)-binding residues include Asp264, Glu280, and Asn282.

Belongs to the D-alanine--D-alanine ligase family. The cofactor is Mg(2+). Mn(2+) serves as cofactor.

It is found in the cytoplasm. The enzyme catalyses 2 D-alanine + ATP = D-alanyl-D-alanine + ADP + phosphate + H(+). Its pathway is cell wall biogenesis; peptidoglycan biosynthesis. Functionally, cell wall formation. This is D-alanine--D-alanine ligase from Roseobacter denitrificans (strain ATCC 33942 / OCh 114) (Erythrobacter sp. (strain OCh 114)).